The chain runs to 277 residues: MNKSFIKNKLKQESFVPSKKMGQNFLLSNNIKNKIVDVANINKDDLILEIGPGWGAITEILVQKTNILIAIELDKRLYAHLKTYIKTSNFHIINNDVLCVDLDNLILDYNNTQKIQKIKVVANLPYAISSKIVLKIIQSKLINDAYIMVQKEMAERIGAKVNTRGYNAFTVLVQLFCKTKILFEVNAKEFHPQPKVQSAVIHLENLHNSVNFNIEELGKFLRICFLNKRKKLKNNLSNIYDIKIINQMFIDYNLDMNLRAENIEPKMFLKLFNYLNR.

Residues Asn-24, Leu-26, Gly-51, Glu-72, Asp-96, and Asn-123 each contribute to the S-adenosyl-L-methionine site.

The protein belongs to the class I-like SAM-binding methyltransferase superfamily. rRNA adenine N(6)-methyltransferase family. RsmA subfamily.

Its subcellular location is the cytoplasm. The enzyme catalyses adenosine(1518)/adenosine(1519) in 16S rRNA + 4 S-adenosyl-L-methionine = N(6)-dimethyladenosine(1518)/N(6)-dimethyladenosine(1519) in 16S rRNA + 4 S-adenosyl-L-homocysteine + 4 H(+). Its function is as follows. Specifically dimethylates two adjacent adenosines (A1518 and A1519) in the loop of a conserved hairpin near the 3'-end of 16S rRNA in the 30S particle. May play a critical role in biogenesis of 30S subunits. This chain is Ribosomal RNA small subunit methyltransferase A, found in Ureaplasma parvum serovar 3 (strain ATCC 27815 / 27 / NCTC 11736).